The chain runs to 143 residues: Large ribosomal subunit protein uL11 (143 aa).

Belongs to the universal ribosomal protein uL11 family. In terms of assembly, part of the ribosomal stalk of the 50S ribosomal subunit. Interacts with L10 and the large rRNA to form the base of the stalk. L10 forms an elongated spine to which L12 dimers bind in a sequential fashion forming a multimeric L10(L12)X complex. In terms of processing, one or more lysine residues are methylated.

Its function is as follows. Forms part of the ribosomal stalk which helps the ribosome interact with GTP-bound translation factors. The sequence is that of Large ribosomal subunit protein uL11 from Pseudomonas syringae pv. tomato (strain ATCC BAA-871 / DC3000).